The chain runs to 320 residues: ATP-dependent 6-phosphofructokinase (320 aa).

Glycine 12 lines the ATP pocket. ADP is bound at residue 22–26 (RAVVR). Residues 73–74 (RF) and 103–106 (GDGS) contribute to the ATP site. Aspartate 104 serves as a coordination point for Mg(2+). 126–128 (TID) is a binding site for substrate. The Proton acceptor role is filled by aspartate 128. Arginine 155 lines the ADP pocket. Residues arginine 163 and 170–172 (MGR) each bind substrate. ADP is bound by residues 186–188 (GAE) and 214–216 (KNH). Residues glutamate 223, arginine 244, and 250–253 (HIQR) contribute to the substrate site.

Belongs to the phosphofructokinase type A (PFKA) family. ATP-dependent PFK group I subfamily. Prokaryotic clade 'B1' sub-subfamily. In terms of assembly, homotetramer. Requires Mg(2+) as cofactor.

Its subcellular location is the cytoplasm. The catalysed reaction is beta-D-fructose 6-phosphate + ATP = beta-D-fructose 1,6-bisphosphate + ADP + H(+). It functions in the pathway carbohydrate degradation; glycolysis; D-glyceraldehyde 3-phosphate and glycerone phosphate from D-glucose: step 3/4. Allosterically activated by ADP and other diphosphonucleosides, and allosterically inhibited by phosphoenolpyruvate. Catalyzes the phosphorylation of D-fructose 6-phosphate to fructose 1,6-bisphosphate by ATP, the first committing step of glycolysis. This chain is ATP-dependent 6-phosphofructokinase, found in Teredinibacter turnerae (strain ATCC 39867 / T7901).